An 816-amino-acid chain; its full sequence is Sucrose synthase 2 (816 aa).

Position 15 is a phosphoserine (serine 15). A GT-B glycosyltransferase region spans residues 280 to 757; the sequence is MVFNVVILSP…GLQRIEEKYT (478 aa).

The protein belongs to the glycosyltransferase 1 family. Plant sucrose synthase subfamily.

It carries out the reaction an NDP-alpha-D-glucose + D-fructose = a ribonucleoside 5'-diphosphate + sucrose + H(+). Sucrose-cleaving enzyme that provides UDP-glucose and fructose for various metabolic pathways. This is Sucrose synthase 2 (SUS1) from Zea mays (Maize).